The primary structure comprises 590 residues: Phosphatidylserine decarboxylase proenzyme 1, mitochondrial (590 aa).

The transit peptide at 1–59 (MPLKPISFRWSKTSVRSVPNPFMYGPDNLNKPLSRASQMAERVHQQTPSSTNYQQRRYF) directs the protein to the mitochondrion. At 60 to 140 (SYYYYQFPKI…GKERRRFIRW (81 aa)) the chain is on the mitochondrial matrix side. Residues 141–159 (WTVTSLTIVLGGVYAKIKY) traverse the membrane as a helical segment. The Mitochondrial intermembrane segment spans residues 160 to 590 (ERGDHEENPY…KVGQSLGGFV (431 aa)). Catalysis depends on charge relay system; for autoendoproteolytic cleavage activity residues D260, H403, and S558. S558 serves as the catalytic Schiff-base intermediate with substrate; via pyruvic acid; for decarboxylase activity. S558 bears the Pyruvic acid (Ser); by autocatalysis mark.

The protein belongs to the phosphatidylserine decarboxylase family. PSD-B subfamily. Eukaryotic type I sub-subfamily. In terms of assembly, heterodimer of a large membrane-associated beta subunit and a small pyruvoyl-containing alpha subunit. It depends on pyruvate as a cofactor. Post-translationally, is synthesized initially as an inactive proenzyme. Formation of the active enzyme involves a self-maturation process in which the active site pyruvoyl group is generated from an internal serine residue via an autocatalytic post-translational modification. Two non-identical subunits are generated from the proenzyme in this reaction, and the pyruvate is formed at the N-terminus of the alpha chain, which is derived from the carboxyl end of the proenzyme. The autoendoproteolytic cleavage occurs by a canonical serine protease mechanism, in which the side chain hydroxyl group of the serine supplies its oxygen atom to form the C-terminus of the beta chain, while the remainder of the serine residue undergoes an oxidative deamination to produce ammonia and the pyruvoyl prosthetic group on the alpha chain. During this reaction, the Ser that is part of the protease active site of the proenzyme becomes the pyruvoyl prosthetic group, which constitutes an essential element of the active site of the mature decarboxylase.

It is found in the mitochondrion inner membrane. The catalysed reaction is a 1,2-diacyl-sn-glycero-3-phospho-L-serine + H(+) = a 1,2-diacyl-sn-glycero-3-phosphoethanolamine + CO2. It participates in phospholipid metabolism; phosphatidylethanolamine biosynthesis; phosphatidylethanolamine from CDP-diacylglycerol: step 2/2. Catalyzes the formation of phosphatidylethanolamine (PtdEtn) from phosphatidylserine (PtdSer). Plays a central role in phospholipid metabolism and in the interorganelle trafficking of phosphatidylserine. Important for virulence. In Candida albicans (strain SC5314 / ATCC MYA-2876) (Yeast), this protein is Phosphatidylserine decarboxylase proenzyme 1, mitochondrial.